The following is a 447-amino-acid chain: N-succinylarginine dihydrolase (447 aa).

Substrate contacts are provided by residues 19–28 (AGLSFGNEAS), Asn-110, and 137–138 (HR). Residue Glu-174 is part of the active site. A substrate-binding site is contributed by Arg-212. The active site involves His-248. Substrate is bound by residues Asp-250 and Asn-359. Cys-365 functions as the Nucleophile in the catalytic mechanism.

Belongs to the succinylarginine dihydrolase family. As to quaternary structure, homodimer.

It catalyses the reaction N(2)-succinyl-L-arginine + 2 H2O + 2 H(+) = N(2)-succinyl-L-ornithine + 2 NH4(+) + CO2. It participates in amino-acid degradation; L-arginine degradation via AST pathway; L-glutamate and succinate from L-arginine: step 2/5. Functionally, catalyzes the hydrolysis of N(2)-succinylarginine into N(2)-succinylornithine, ammonia and CO(2). This is N-succinylarginine dihydrolase from Salmonella gallinarum (strain 287/91 / NCTC 13346).